A 363-amino-acid polypeptide reads, in one-letter code: uncharacterized protein (363 aa).

Helical transmembrane passes span 20–40 (WFFTLVEMILAVGGLIMNTNI), 63–83 (INFAILSGFQLARNFFLFLVM), 101–121 (FPLIFCYIHCAASFFLLGVQS), 141–161 (SVWQSTIAAVCVALSLLFTAF), 186–206 (FSLLTLLILLHATGLIFIMLA), 227–247 (IFKYETLAWQISLFISGCVVL), and 268–288 (FLIVPLLISFMHPLYLIWYVL). Positions 329–363 (PRADLTPNDTLHMESKKKPLSQSPRVVIEEEDVAE) are disordered.

It is found in the membrane. This is an uncharacterized protein from Caenorhabditis elegans.